A 550-amino-acid polypeptide reads, in one-letter code: Carboxypeptidase Y homolog A (550 aa).

A signal peptide spans 1–18; it reads MKSLVLGLLVGSAIASGP. Positions 19–131 are excised as a propeptide; sequence LQHVLHAPPD…KLAQYDLRIK (113 aa). A disordered region spans residues 20-39; sequence QHVLHAPPDPEPKPEPEPQV. 5 cysteine pairs are disulfide-bonded: C185–C424, C319–C333, C343–C366, C350–C359, and C388–C394. Residues N203 and N216 are each glycosylated (N-linked (GlcNAc...) asparagine). S272 is an active-site residue. N-linked (GlcNAc...) asparagine glycosylation is present at N289. N387 is a glycosylation site (N-linked (GlcNAc...) asparagine). Residue D463 is part of the active site. Residues N493 and N514 are each glycosylated (N-linked (GlcNAc...) asparagine). H525 is an active-site residue.

Belongs to the peptidase S10 family.

It localises to the vacuole. The enzyme catalyses Release of a C-terminal amino acid with broad specificity.. Functionally, vacuolar carboxypeptidase involved in degradation of small peptides. Digests preferentially peptides containing an aliphatic or hydrophobic residue in P1' position, as well as methionine, leucine or phenylalanine in P1 position of ester substrate. The sequence is that of Carboxypeptidase Y homolog A (CPYA) from Paracoccidioides brasiliensis (strain Pb03).